The chain runs to 372 residues: MSSPERKRKKRSLEPSPESTPNPSLPDDLIVSILARVSRLYYPILSLVSKSSRTLVTSPELYKTRSFFNRTESCLYVCLDFPPDPNPRWFTLYRKPNQNITEKTKNSSGFVLAPIPNHHSHSSSIVAIGSNIYAIGGSIENAPSSKVSILDCRSHTWHEAPSMRMKRNYPAANVVDGKIYVAGGLEEFDSSKWMEVFDIKTQTWEFVLSPLAERFIYRSLVIEGEIYIFGDKVVTYKPKEDRWGGVGEHQSMDLGLFFHSYCVIDNVLYCYRPGGIKWYESEKRSWRKLRGLKGLSKLASSCVKLADYGGKMALLWDKYIPCSGNKSHSISCAVVSLERCKNQGIRGKVEWFDDMLTVPSSYNFVGALAATL.

The span at 1–11 shows a compositional bias: basic residues; that stretch reads MSSPERKRKKR. The disordered stretch occupies residues 1–24; the sequence is MSSPERKRKKRSLEPSPESTPNPS. In terms of domain architecture, F-box spans 19-65; the sequence is STPNPSLPDDLIVSILARVSRLYYPILSLVSKSSRTLVTSPELYKTR. Kelch repeat units follow at residues 131-177, 179-224, 226-271, and 273-312; these read NIYA…VVDG, IYVA…VIEG, IYIF…LYCY, and PGGI…GGKM.

This is F-box/kelch-repeat protein At5g49000 from Arabidopsis thaliana (Mouse-ear cress).